The sequence spans 191 residues: Orotate phosphoribosyltransferase (191 aa).

114 to 122 provides a ligand contact to 5-phospho-alpha-D-ribose 1-diphosphate; the sequence is EDVITTGGS. Residues threonine 118 and arginine 146 each coordinate orotate.

The protein belongs to the purine/pyrimidine phosphoribosyltransferase family. PyrE subfamily. Homodimer. Mg(2+) serves as cofactor.

It carries out the reaction orotidine 5'-phosphate + diphosphate = orotate + 5-phospho-alpha-D-ribose 1-diphosphate. It participates in pyrimidine metabolism; UMP biosynthesis via de novo pathway; UMP from orotate: step 1/2. In terms of biological role, catalyzes the transfer of a ribosyl phosphate group from 5-phosphoribose 1-diphosphate to orotate, leading to the formation of orotidine monophosphate (OMP). The polypeptide is Orotate phosphoribosyltransferase (Desulforamulus reducens (strain ATCC BAA-1160 / DSM 100696 / MI-1) (Desulfotomaculum reducens)).